A 261-amino-acid chain; its full sequence is Glucose 1-dehydrogenase 2 (261 aa).

Position 11-35 (11-35) interacts with NADP(+); the sequence is VVTGGSKGLGRAMAVRFGQEQSKVV. Position 145 (Ser-145) interacts with substrate. Tyr-158 acts as the Proton acceptor in catalysis.

It belongs to the short-chain dehydrogenases/reductases (SDR) family. As to quaternary structure, homotetramer.

It catalyses the reaction D-glucose + NAD(+) = D-glucono-1,5-lactone + NADH + H(+). It carries out the reaction D-glucose + NADP(+) = D-glucono-1,5-lactone + NADPH + H(+). This chain is Glucose 1-dehydrogenase 2 (gdhII), found in Priestia megaterium (Bacillus megaterium).